A 513-amino-acid polypeptide reads, in one-letter code: ATP synthase subunit alpha (513 aa).

169–176 (GDRQTGKT) contributes to the ATP binding site.

Belongs to the ATPase alpha/beta chains family. F-type ATPases have 2 components, CF(1) - the catalytic core - and CF(0) - the membrane proton channel. CF(1) has five subunits: alpha(3), beta(3), gamma(1), delta(1), epsilon(1). CF(0) has three main subunits: a(1), b(2) and c(9-12). The alpha and beta chains form an alternating ring which encloses part of the gamma chain. CF(1) is attached to CF(0) by a central stalk formed by the gamma and epsilon chains, while a peripheral stalk is formed by the delta and b chains.

It localises to the cell inner membrane. The catalysed reaction is ATP + H2O + 4 H(+)(in) = ADP + phosphate + 5 H(+)(out). Functionally, produces ATP from ADP in the presence of a proton gradient across the membrane. The alpha chain is a regulatory subunit. The protein is ATP synthase subunit alpha of Haemophilus influenzae (strain ATCC 51907 / DSM 11121 / KW20 / Rd).